The following is a 351-amino-acid chain: Mitogen-activated protein kinase 2 (351 aa).

Residues 16–304 (YEILDVIGEG…AEEALQHNYL (289 aa)) form the Protein kinase domain. ATP-binding positions include 22–30 (IGEGAYGIV) and Lys-45. Asp-140 functions as the Proton acceptor in the catalytic mechanism. A Phosphothreonine modification is found at Thr-176. The TXY signature appears at 176–178 (TEY). Tyr-178 carries the post-translational modification Phosphotyrosine.

Belongs to the protein kinase superfamily. CMGC Ser/Thr protein kinase family. MAP kinase subfamily. Mg(2+) is required as a cofactor. Requires Mn(2+) as cofactor. Dually phosphorylated on Thr-176 and Tyr-178, which activates the enzyme.

It localises to the nucleus. The catalysed reaction is L-seryl-[protein] + ATP = O-phospho-L-seryl-[protein] + ADP + H(+). The enzyme catalyses L-threonyl-[protein] + ATP = O-phospho-L-threonyl-[protein] + ADP + H(+). Activated by tyrosine and threonine phosphorylation. Inhibited by the MEK inhibitor U0126 but not by the p38 inhibitor SB203580. Cobalt abolishes kinase activity, while calcium, copper and nickel have little effect on kinase activity. Functionally, serine-threonine protein kinase which may be involved in pheromone signaling. Functionally complements the MAPK pheromone signaling pathway in S.cerevisiae. This is Mitogen-activated protein kinase 2 from Pneumocystis carinii.